Reading from the N-terminus, the 175-residue chain is Transcriptional repressor NrdR (175 aa).

A zinc finger spans residues 3–32 (CPYCSHPDSKVIDSRDVDDGVRRRRECVVC). The region spanning 47–137 (LFVVKKDQRR…VYREFTDITQ (91 aa)) is the ATP-cone domain.

The protein belongs to the NrdR family. It depends on Zn(2+) as a cofactor.

Functionally, negatively regulates transcription of bacterial ribonucleotide reductase nrd genes and operons by binding to NrdR-boxes. This Dehalococcoides mccartyi (strain ATCC BAA-2100 / JCM 16839 / KCTC 5957 / BAV1) protein is Transcriptional repressor NrdR.